The sequence spans 569 residues: Proline--tRNA ligase (569 aa).

Belongs to the class-II aminoacyl-tRNA synthetase family. ProS type 1 subfamily. Homodimer.

It is found in the cytoplasm. The catalysed reaction is tRNA(Pro) + L-proline + ATP = L-prolyl-tRNA(Pro) + AMP + diphosphate. In terms of biological role, catalyzes the attachment of proline to tRNA(Pro) in a two-step reaction: proline is first activated by ATP to form Pro-AMP and then transferred to the acceptor end of tRNA(Pro). As ProRS can inadvertently accommodate and process non-cognate amino acids such as alanine and cysteine, to avoid such errors it has two additional distinct editing activities against alanine. One activity is designated as 'pretransfer' editing and involves the tRNA(Pro)-independent hydrolysis of activated Ala-AMP. The other activity is designated 'posttransfer' editing and involves deacylation of mischarged Ala-tRNA(Pro). The misacylated Cys-tRNA(Pro) is not edited by ProRS. The polypeptide is Proline--tRNA ligase (Halalkalibacterium halodurans (strain ATCC BAA-125 / DSM 18197 / FERM 7344 / JCM 9153 / C-125) (Bacillus halodurans)).